We begin with the raw amino-acid sequence, 520 residues long: 3-phosphoshikimate 1-carboxyvinyltransferase, chloroplastic (520 aa).

The N-terminal 76 residues, 1 to 76 (MAQVSRICNG…KVMSSVSTAE (76 aa)), are a transit peptide targeting the chloroplast. Residues 20–39 (LSKSSQRKSPLSVSLKTQQH) are disordered. Positions 99, 100, and 104 each coordinate 3-phosphoshikimate. Lysine 99 is a binding site for phosphoenolpyruvate. Phosphoenolpyruvate is bound by residues glycine 177 and arginine 207. The 3-phosphoshikimate site is built by serine 254, serine 255, glutamine 256, serine 282, aspartate 407, and lysine 434. Glutamine 256 contributes to the phosphoenolpyruvate binding site. The active-site Proton acceptor is the aspartate 407. The phosphoenolpyruvate site is built by arginine 438, arginine 480, and lysine 505.

This sequence belongs to the EPSP synthase family.

It localises to the plastid. The protein resides in the chloroplast. The catalysed reaction is 3-phosphoshikimate + phosphoenolpyruvate = 5-O-(1-carboxyvinyl)-3-phosphoshikimate + phosphate. It functions in the pathway metabolic intermediate biosynthesis; chorismate biosynthesis; chorismate from D-erythrose 4-phosphate and phosphoenolpyruvate: step 6/7. In terms of biological role, catalyzes the transfer of the enolpyruvyl moiety of phosphoenolpyruvate (PEP) to the 5-hydroxyl of shikimate-3-phosphate (S3P) to produce enolpyruvyl shikimate-3-phosphate and inorganic phosphate. The polypeptide is 3-phosphoshikimate 1-carboxyvinyltransferase, chloroplastic (Arabidopsis thaliana (Mouse-ear cress)).